Consider the following 195-residue polypeptide: dTTP/UTP pyrophosphatase (195 aa).

The active-site Proton acceptor is aspartate 73.

It belongs to the Maf family. YhdE subfamily. A divalent metal cation is required as a cofactor.

The protein localises to the cytoplasm. The enzyme catalyses dTTP + H2O = dTMP + diphosphate + H(+). The catalysed reaction is UTP + H2O = UMP + diphosphate + H(+). Functionally, nucleoside triphosphate pyrophosphatase that hydrolyzes dTTP and UTP. May have a dual role in cell division arrest and in preventing the incorporation of modified nucleotides into cellular nucleic acids. The sequence is that of dTTP/UTP pyrophosphatase from Deinococcus radiodurans (strain ATCC 13939 / DSM 20539 / JCM 16871 / CCUG 27074 / LMG 4051 / NBRC 15346 / NCIMB 9279 / VKM B-1422 / R1).